The chain runs to 305 residues: Glycine--tRNA ligase alpha subunit (305 aa).

This sequence belongs to the class-II aminoacyl-tRNA synthetase family. In terms of assembly, tetramer of two alpha and two beta subunits.

It localises to the cytoplasm. It carries out the reaction tRNA(Gly) + glycine + ATP = glycyl-tRNA(Gly) + AMP + diphosphate. This is Glycine--tRNA ligase alpha subunit from Ligilactobacillus salivarius (strain UCC118) (Lactobacillus salivarius).